We begin with the raw amino-acid sequence, 813 residues long: Ubiquitin carboxyl-terminal hydrolase 45 (813 aa).

A compositionally biased stretch (basic and acidic residues) spans 1–14 (MRVKDPSKDLPEKG). Residues 1 to 27 (MRVKDPSKDLPEKGKRNKRPLLPHDED) are disordered. An interaction with ERCC1 region spans residues 1–62 (MRVKDPSKDL…AVAESLWSVC (62 aa)). 2 positions are modified to phosphoserine: serine 28 and serine 29. The UBP-type zinc-finger motif lies at 36-153 (LTCQHVSYAV…AQIVDFLQKH (118 aa)). Cysteine 38, histidine 40, cysteine 62, cysteine 65, cysteine 85, cysteine 88, cysteine 93, histidine 101, histidine 105, histidine 114, cysteine 127, and cysteine 130 together coordinate Zn(2+). The USP domain maps to 191–812 (KGITNLGNTC…QAYLLFYERI (622 aa)). Cysteine 200 acts as the Nucleophile in catalysis. Basic and acidic residues-rich tracts occupy residues 405-414 (LQETDQDHNK) and 450-466 (WPSE…KNDN). Positions 405 to 552 (LQETDQDHNK…QAKETHGGEE (148 aa)) are disordered. Positions 472 to 488 (PASTLSTEASLNESLTD) are enriched in polar residues. Phosphoserine is present on residues serine 507 and serine 525. The segment covering 521–533 (SRGDSCGHAEQHP) has biased composition (basic and acidic residues). The active-site Proton acceptor is the histidine 745.

It belongs to the peptidase C19 family. As to quaternary structure, interacts with ERCC1. The catalytically active form interacts with SPDL1. Retina.

The protein localises to the photoreceptor inner segment. It localises to the cytoplasm. The protein resides in the nucleus. It carries out the reaction Thiol-dependent hydrolysis of ester, thioester, amide, peptide and isopeptide bonds formed by the C-terminal Gly of ubiquitin (a 76-residue protein attached to proteins as an intracellular targeting signal).. Its function is as follows. Catalyzes the deubiquitination of SPDL1. Plays a role in the repair of UV-induced DNA damage via deubiquitination of ERCC1, promoting its recruitment to DNA damage sites. May be involved in the maintenance of photoreceptor function. May play a role in normal retinal development. Plays a role in cell migration. This chain is Ubiquitin carboxyl-terminal hydrolase 45 (Usp45), found in Mus musculus (Mouse).